We begin with the raw amino-acid sequence, 515 residues long: DNA-directed RNA polymerase subunit Rpo2N (515 aa).

The protein belongs to the RNA polymerase beta chain family. In terms of assembly, part of the RNA polymerase complex.

Its subcellular location is the cytoplasm. It carries out the reaction RNA(n) + a ribonucleoside 5'-triphosphate = RNA(n+1) + diphosphate. Functionally, DNA-dependent RNA polymerase (RNAP) catalyzes the transcription of DNA into RNA using the four ribonucleoside triphosphates as substrates. The Rpo2 subunit (Rpo2N and Rpo2C in this organism) is implicated in DNA promoter recognition and in nucleotide binding. The chain is DNA-directed RNA polymerase subunit Rpo2N from Methanothermobacter thermautotrophicus (strain Winter) (Methanobacterium thermoautotrophicum).